A 204-amino-acid polypeptide reads, in one-letter code: ADP-ribosylation factor-like protein 15 (204 aa).

Residues 39–46 (GLTGSGKT), 82–86 (ELGGA), and 142–145 (NHQD) contribute to the GTP site.

Belongs to the small GTPase superfamily. Arf family.

This Homo sapiens (Human) protein is ADP-ribosylation factor-like protein 15 (ARL15).